The primary structure comprises 273 residues: Putative peptidyl-prolyl cis-trans isomerase Cbf2 (273 aa).

The signal sequence occupies residues 1–21 (MKKFSLVAAALIAGVALNVNA). The 98-residue stretch at 131–228 (PARVQAKHIL…FGYHVILKEN (98 aa)) folds into the PpiC domain.

The catalysed reaction is [protein]-peptidylproline (omega=180) = [protein]-peptidylproline (omega=0). The sequence is that of Putative peptidyl-prolyl cis-trans isomerase Cbf2 (cbf2) from Campylobacter jejuni subsp. jejuni serotype O:23/36 (strain 81-176).